A 438-amino-acid polypeptide reads, in one-letter code: 23S rRNA (uracil(1939)-C(5))-methyltransferase RlmD (438 aa).

Residues 11–69 enclose the TRAM domain; the sequence is LQPESKHQQVLVEKLDHQGAGIAYLNKKPLFIDGTLPGEEVVTQLTESKSKFARGKLIK. The [4Fe-4S] cluster site is built by C82, C88, C91, and C169. 6 residues coordinate S-adenosyl-L-methionine: Q272, F301, N306, E322, N349, and D370. C396 (nucleophile) is an active-site residue.

Belongs to the class I-like SAM-binding methyltransferase superfamily. RNA M5U methyltransferase family. RlmD subfamily.

The catalysed reaction is uridine(1939) in 23S rRNA + S-adenosyl-L-methionine = 5-methyluridine(1939) in 23S rRNA + S-adenosyl-L-homocysteine + H(+). In terms of biological role, catalyzes the formation of 5-methyl-uridine at position 1939 (m5U1939) in 23S rRNA. The protein is 23S rRNA (uracil(1939)-C(5))-methyltransferase RlmD of Vibrio vulnificus (strain YJ016).